Reading from the N-terminus, the 299-residue chain is Probable lipid kinase YegS (299 aa).

A DAGKc domain is found at alanine 2–threonine 133. ATP contacts are provided by residues threonine 40, glycine 66 to glutamate 72, and threonine 95. Mg(2+) is bound by residues leucine 215, aspartate 218, and leucine 220. Glutamate 271 functions as the Proton acceptor in the catalytic mechanism.

This sequence belongs to the diacylglycerol/lipid kinase family. YegS lipid kinase subfamily. Mg(2+) serves as cofactor. It depends on Ca(2+) as a cofactor.

The protein localises to the cytoplasm. Functionally, probably phosphorylates lipids; the in vivo substrate is unknown. The polypeptide is Probable lipid kinase YegS (Salmonella heidelberg (strain SL476)).